Reading from the N-terminus, the 501-residue chain is Arabinose import ATP-binding protein AraG (501 aa).

2 ABC transporter domains span residues 4-239 (LEFN…MVGR) and 252-495 (LGDN…LPDK). ATP is bound at residue 36 to 43 (GENGAGKS).

Belongs to the ABC transporter superfamily. Arabinose importer (TC 3.A.1.2.2) family. As to quaternary structure, the complex is composed of two ATP-binding proteins (AraG), two transmembrane proteins (AraH) and a solute-binding protein (AraF).

The protein resides in the cell inner membrane. It catalyses the reaction L-arabinose(out) + ATP + H2O = L-arabinose(in) + ADP + phosphate + H(+). Part of the ABC transporter complex AraFGH involved in arabinose import. Responsible for energy coupling to the transport system. The chain is Arabinose import ATP-binding protein AraG from Rhizobium etli (strain ATCC 51251 / DSM 11541 / JCM 21823 / NBRC 15573 / CFN 42).